We begin with the raw amino-acid sequence, 1397 residues long: DNA-directed RNA polymerase subunit beta' (1397 aa).

Cys-75, Cys-77, Cys-90, and Cys-93 together coordinate Zn(2+). Mg(2+) contacts are provided by Asp-465, Asp-467, and Asp-469. Zn(2+) is bound by residues Cys-819, Cys-893, Cys-900, and Cys-903.

Belongs to the RNA polymerase beta' chain family. In terms of assembly, the RNAP catalytic core consists of 2 alpha, 1 beta, 1 beta' and 1 omega subunit. When a sigma factor is associated with the core the holoenzyme is formed, which can initiate transcription. Mg(2+) is required as a cofactor. The cofactor is Zn(2+).

The catalysed reaction is RNA(n) + a ribonucleoside 5'-triphosphate = RNA(n+1) + diphosphate. Functionally, DNA-dependent RNA polymerase catalyzes the transcription of DNA into RNA using the four ribonucleoside triphosphates as substrates. The sequence is that of DNA-directed RNA polymerase subunit beta' from Acinetobacter baylyi (strain ATCC 33305 / BD413 / ADP1).